A 354-amino-acid polypeptide reads, in one-letter code: Hyaluronan and proteoglycan link protein 1 (354 aa).

A propeptide spanning residues 1–15 (MKSLLLLVLISICWA) is cleaved from the precursor. 2 N-linked (GlcNAc...) asparagine glycosylation sites follow: N21 and N56. The region spanning 38–152 (PHLLVEAEQA…EGLEDDTVVV (115 aa)) is the Ig-like V-type domain. 5 cysteine pairs are disulfide-bonded: C61–C139, C181–C252, C205–C226, C279–C349, and C304–C325. 2 consecutive Link domains span residues 159-254 (VVFP…FCFT) and 259-351 (GRFY…YCFR).

Belongs to the HAPLN family. Widely expressed. Weakly expressed in the brain.

The protein resides in the secreted. The protein localises to the extracellular space. Its subcellular location is the extracellular matrix. Functionally, stabilizes the aggregates of proteoglycan monomers with hyaluronic acid in the extracellular cartilage matrix. This is Hyaluronan and proteoglycan link protein 1 (HAPLN1) from Homo sapiens (Human).